A 721-amino-acid polypeptide reads, in one-letter code: Peptide-N(4)-(N-acetyl-beta-glucosaminyl)asparagine amidase (721 aa).

The Zn(2+) site is built by Cys193, Cys196, Cys225, and Cys228. The Nucleophile role is filled by Cys251. Residues His278 and Asp295 contribute to the active site.

It belongs to the transglutaminase-like superfamily. PNGase family. Zn(2+) is required as a cofactor.

It is found in the cytoplasm. The catalysed reaction is Hydrolysis of an N(4)-(acetyl-beta-D-glucosaminyl)asparagine residue in which the glucosamine residue may be further glycosylated, to yield a (substituted) N-acetyl-beta-D-glucosaminylamine and a peptide containing an aspartate residue.. In terms of biological role, specifically deglycosylates the denatured form of N-linked glycoproteins in the cytoplasm and assists their proteasome-mediated degradation. Cleaves the beta-aspartyl-glucosamine (GlcNAc) of the glycan and the amide side chain of Asn, converting Asn to Asp. Prefers proteins containing high-mannose over those bearing complex type oligosaccharides. Can recognize misfolded proteins in the endoplasmic reticulum that are exported to the cytosol to be destroyed and deglycosylate them, while it has no activity toward native proteins. Deglycosylation is a prerequisite for subsequent proteasome-mediated degradation of some, but not all, misfolded glycoproteins. The sequence is that of Peptide-N(4)-(N-acetyl-beta-glucosaminyl)asparagine amidase (PNG1) from Arabidopsis thaliana (Mouse-ear cress).